Here is a 394-residue protein sequence, read N- to C-terminus: Putative agmatinase 1 (394 aa).

The first 20 residues, 1-20 (MALQSLFLILLAGAAQLAQA), serve as a signal peptide directing secretion. 6 residues coordinate Mn(2+): His186, Asp209, His211, Asp213, Asp307, and Asp309.

The protein belongs to the arginase family. It depends on Mn(2+) as a cofactor.

It carries out the reaction agmatine + H2O = urea + putrescine. The protein is Putative agmatinase 1 of Schizosaccharomyces pombe (strain 972 / ATCC 24843) (Fission yeast).